The following is a 247-amino-acid chain: Aspartate/glutamate leucyltransferase (247 aa).

This sequence belongs to the R-transferase family. Bpt subfamily.

Its subcellular location is the cytoplasm. It carries out the reaction N-terminal L-glutamyl-[protein] + L-leucyl-tRNA(Leu) = N-terminal L-leucyl-L-glutamyl-[protein] + tRNA(Leu) + H(+). The catalysed reaction is N-terminal L-aspartyl-[protein] + L-leucyl-tRNA(Leu) = N-terminal L-leucyl-L-aspartyl-[protein] + tRNA(Leu) + H(+). Its function is as follows. Functions in the N-end rule pathway of protein degradation where it conjugates Leu from its aminoacyl-tRNA to the N-termini of proteins containing an N-terminal aspartate or glutamate. The sequence is that of Aspartate/glutamate leucyltransferase from Dechloromonas aromatica (strain RCB).